A 131-amino-acid polypeptide reads, in one-letter code: Large ribosomal subunit protein bL17 (131 aa).

This sequence belongs to the bacterial ribosomal protein bL17 family. As to quaternary structure, part of the 50S ribosomal subunit. Contacts protein L32.

The protein is Large ribosomal subunit protein bL17 of Burkholderia mallei (strain NCTC 10229).